Consider the following 304-residue polypeptide: Insulin-like growth factor-binding protein 2 (304 aa).

A signal peptide spans 1–34 (MLPRLGGPALPLLLPSLLLLLLLGAGGCGPGVRA). Residues 36-118 (VLFRCPPCTP…VTGAGTCEKR (83 aa)) form the IGFBP N-terminal domain. Cystine bridges form between Cys40–Cys68, Cys43–Cys70, Cys51–Cys71, Cys59–Cys74, Cys82–Cys95, Cys89–Cys115, Cys206–Cys240, Cys251–Cys262, and Cys264–Cys285. The region spanning 203–285 (RTPCQQELDQ…APTIRGDPEC (83 aa)) is the Thyroglobulin type-1 domain. A Cell attachment site motif is present at residues 280–282 (RGD).

In terms of assembly, interacts with IGF1. Interacts with IGF2. Interacts (via RGD motif) with integrin alpha5/ITGA5; this interaction induces cell migration, adhesion or apoptosis according to the context. Interacts with PTPRB; this interaction leads to PTPRB dimerization and inactivation. Cleaved by MMP9 leading to release of free IGF2 from IGFBP2-IGF2 complex, which contributes to enhance the motility and the growth of astrocytes. In terms of processing, O-glycosylated. As to expression, in adults, expressed in brain, testes, ovaries, and kidney. Expression in the adult liver is barely detectable.

Its subcellular location is the secreted. Its function is as follows. Multifunctional protein that plays a critical role in regulating the availability of IGFs such as IGF1 and IGF2 to their receptors and thereby regulates IGF-mediated cellular processes including proliferation, differentiation, and apoptosis in a cell-type specific manner. Functions coordinately with receptor protein tyrosine phosphatase beta/PTPRB and the IGF1 receptor to regulate IGF1-mediated signaling by stimulating the phosphorylation of PTEN leading to its inactivation and AKT1 activation. Plays a positive role in cell migration via interaction with integrin alpha5/ITGA5 through an RGD motif. Additionally, interaction with ITGA5/ITGB1 enhances the adhesion of endothelial progenitor cells to endothelial cells. Upon mitochondrial damage, facilitates apoptosis with ITGA5 of podocytes, and then activates the phosphorylation of focal adhesion kinase (FAK)-mediated mitochondrial injury. In Rattus norvegicus (Rat), this protein is Insulin-like growth factor-binding protein 2 (Igfbp2).